A 213-amino-acid polypeptide reads, in one-letter code: Uridine kinase (213 aa).

Position 15 to 22 (15 to 22 (GASASGKS)) interacts with ATP.

Belongs to the uridine kinase family.

It is found in the cytoplasm. It catalyses the reaction uridine + ATP = UMP + ADP + H(+). The catalysed reaction is cytidine + ATP = CMP + ADP + H(+). Its pathway is pyrimidine metabolism; CTP biosynthesis via salvage pathway; CTP from cytidine: step 1/3. It participates in pyrimidine metabolism; UMP biosynthesis via salvage pathway; UMP from uridine: step 1/1. In Enterobacter sp. (strain 638), this protein is Uridine kinase.